The primary structure comprises 252 residues: Two-component response regulator ORR2 (252 aa).

Residues 7-157 (RVLVVDDSPV…DVQRLRKCSG (151 aa)) enclose the Response regulatory domain. Position 90 is a 4-aspartylphosphate (aspartate 90).

The protein belongs to the ARR family. Type-A subfamily. In terms of processing, two-component system major event consists of a His-to-Asp phosphorelay between a sensor histidine kinase (HK) and a response regulator (RR). In plants, the His-to-Asp phosphorelay involves an additional intermediate named Histidine-containing phosphotransfer protein (HPt). This multistep phosphorelay consists of a His-Asp-His-Asp sequential transfer of a phosphate group between first a His and an Asp of the HK protein, followed by the transfer to a conserved His of the HPt protein and finally the transfer to an Asp in the receiver domain of the RR protein. Expressed in mature leaves and flowers, and at low levels in roots and shoots.

Functions as a response regulator involved in His-to-Asp phosphorelay signal transduction system. Phosphorylation of the Asp residue in the receiver domain activates the ability of the protein to promote the transcription of target genes. Type-A response regulators seem to act as negative regulators of the cytokinin signaling. The chain is Two-component response regulator ORR2 from Oryza sativa subsp. indica (Rice).